We begin with the raw amino-acid sequence, 291 residues long: 33 kDa chaperonin (291 aa).

2 disulfides stabilise this stretch: C235-C237 and C268-C271.

This sequence belongs to the HSP33 family. Under oxidizing conditions two disulfide bonds are formed involving the reactive cysteines. Under reducing conditions zinc is bound to the reactive cysteines and the protein is inactive.

It is found in the cytoplasm. In terms of biological role, redox regulated molecular chaperone. Protects both thermally unfolding and oxidatively damaged proteins from irreversible aggregation. Plays an important role in the bacterial defense system toward oxidative stress. This chain is 33 kDa chaperonin, found in Streptococcus agalactiae serotype III (strain NEM316).